A 37-amino-acid polypeptide reads, in one-letter code: Large ribosomal subunit protein bL36 (37 aa).

Belongs to the bacterial ribosomal protein bL36 family.

This chain is Large ribosomal subunit protein bL36, found in Desulforudis audaxviator (strain MP104C).